A 244-amino-acid polypeptide reads, in one-letter code: S-adenosyl-L-methionine-dependent Diels-Alderase iliD (244 aa).

The protein belongs to the class I-like SAM-binding methyltransferase superfamily. Erg6/SMT family. It depends on S-adenosyl-L-methionine as a cofactor.

It catalyses the reaction 3-[(2E,4E,8S,10E,12Z)-4,8-dimethyltetradeca-2,4,10,12-tetraenoyl]-4-hydroxy-5-(4-hydroxyphenyl)-1,2-dihydropyridin-2-one = ilicicolin H. Its pathway is mycotoxin biosynthesis. S-adenosyl-l-methionine-dependent Diels-Alderase; part of the gene cluster that mediates the biosynthesis of ilicicolin H, a 4-hydroxy-2-pyridonealkaloid that has potent and broad antifungal activities by inhibiting the mitochondrial respiration chain. IliD catalyzes the Diels-Alder reaction that converts the acyclic 2-pyridone intermediate to 8-epi-ilicicolin H. The biosynthesis of ilicicolin H starts with formation of the tetramic acid by the hybrid PKS-NRPS synthetase iliA with the partnering trans-enoyl reductase iliB since iliA lacks a designated enoylreductase (ER) domain. The cytochrome P450 monooxygenase iliC then catalyzes the ring expansion of the tetramate to the acyclic 2-pyridone. The pericyclase iliD further converts the acyclic 2-pyridone into 8-epi-ilicicolin H. 8-epi-ilicicolin H might then spontaneously convert to ilicicolin H since ilicicolin H is produced in the absence of the epimerase iliE, in contrast to what was observed for the Talaromyces variabilis ilicolin H biosynthetic pathway. The polypeptide is S-adenosyl-L-methionine-dependent Diels-Alderase iliD (Neonectria sp. (strain DH2)).